The sequence spans 192 residues: Thymidine kinase (192 aa).

Residues 9 to 16 and 87 to 90 contribute to the ATP site; these read SAMNAGKS and DECQ. The Proton acceptor role is filled by Glu-88. Residues Cys-145, Cys-147, Cys-182, and His-185 each contribute to the Zn(2+) site.

The protein belongs to the thymidine kinase family. In terms of assembly, homotetramer.

It localises to the cytoplasm. It catalyses the reaction thymidine + ATP = dTMP + ADP + H(+). This is Thymidine kinase from Shewanella oneidensis (strain ATCC 700550 / JCM 31522 / CIP 106686 / LMG 19005 / NCIMB 14063 / MR-1).